Reading from the N-terminus, the 101-residue chain is Urease subunit beta (101 aa).

It belongs to the urease beta subunit family. As to quaternary structure, heterotrimer of UreA (gamma), UreB (beta) and UreC (alpha) subunits. Three heterotrimers associate to form the active enzyme.

It is found in the cytoplasm. The catalysed reaction is urea + 2 H2O + H(+) = hydrogencarbonate + 2 NH4(+). The protein operates within nitrogen metabolism; urea degradation; CO(2) and NH(3) from urea (urease route): step 1/1. The protein is Urease subunit beta of Rhizobium etli (strain ATCC 51251 / DSM 11541 / JCM 21823 / NBRC 15573 / CFN 42).